The sequence spans 249 residues: AA9 family lytic polysaccharide monooxygenase A (249 aa).

The signal sequence occupies residues 1-19; the sequence is MRGPLCFTLIAIAVTSVVA. Cu(2+) contacts are provided by histidine 20 and histidine 97. Cysteine 60 and cysteine 183 are disulfide-bonded. Residue histidine 163 coordinates O2. Position 180 (tyrosine 180) interacts with Cu(2+).

This sequence belongs to the polysaccharide monooxygenase AA9 family. Requires Cu(2+) as cofactor.

Its subcellular location is the secreted. It carries out the reaction [(1-&gt;4)-beta-D-glucosyl]n+m + reduced acceptor + O2 = 4-dehydro-beta-D-glucosyl-[(1-&gt;4)-beta-D-glucosyl]n-1 + [(1-&gt;4)-beta-D-glucosyl]m + acceptor + H2O.. Lytic polysaccharide monooxygenase (LPMO) that depolymerizes crystalline and amorphous polysaccharides via the oxidation of scissile alpha- or beta-(1-4)-glycosidic bonds, yielding C4 oxidation products. Catalysis by LPMOs requires the reduction of the active-site copper from Cu(II) to Cu(I) by a reducing agent and H(2)O(2) or O(2) as a cosubstrate. Active on cellulose and cello-oligosaccharides, as well as plant cell wall-derived hemicellulosic polysaccharides. Also active on cello-oligosaccharides such as cellohexaose, cellopentaose or cellotetraose. In Armillaria gallica (Bulbous honey fungus), this protein is AA9 family lytic polysaccharide monooxygenase A.